The chain runs to 452 residues: Probable phosphoglucosamine mutase (452 aa).

Ser-96 (phosphoserine intermediate) is an active-site residue. Mg(2+)-binding residues include Ser-96, Asp-235, Asp-237, and Asp-239. Phosphoserine is present on Ser-96.

Belongs to the phosphohexose mutase family. The cofactor is Mg(2+). In terms of processing, activated by phosphorylation.

The catalysed reaction is alpha-D-glucosamine 1-phosphate = D-glucosamine 6-phosphate. Its function is as follows. Catalyzes the conversion of glucosamine-6-phosphate to glucosamine-1-phosphate. The chain is Probable phosphoglucosamine mutase from Methanopyrus kandleri (strain AV19 / DSM 6324 / JCM 9639 / NBRC 100938).